Consider the following 200-residue polypeptide: MARFRGSNWKKSRRLGISLSGTGKELEKRPYAPGQHGPNQRKKLSEYALQLREKQKLRYLYGMTERQFRNTFEIAGNQHGVHGENFMQLLAARLDAVVYSLGLARTRRQARQIVNHGHIEVDGKRVDIPSYTLKPGQEISVREKSLKLDIIAESVEINNFVPDYLEFDADNLKGKYIRVPERSELPAEINEQLIVEYYSR.

The disordered stretch occupies residues 20–41 (SGTGKELEKRPYAPGQHGPNQR). The 64-residue stretch at 92 to 155 (ARLDAVVYSL…LKLDIIAESV (64 aa)) folds into the S4 RNA-binding domain.

The protein belongs to the universal ribosomal protein uS4 family. In terms of assembly, part of the 30S ribosomal subunit. Contacts protein S5. The interaction surface between S4 and S5 is involved in control of translational fidelity.

Functionally, one of the primary rRNA binding proteins, it binds directly to 16S rRNA where it nucleates assembly of the body of the 30S subunit. In terms of biological role, with S5 and S12 plays an important role in translational accuracy. The protein is Small ribosomal subunit protein uS4 of Staphylococcus saprophyticus subsp. saprophyticus (strain ATCC 15305 / DSM 20229 / NCIMB 8711 / NCTC 7292 / S-41).